The primary structure comprises 742 residues: Synaptic vesicle glycoprotein 2A (742 aa).

The interaction with SYT1 stretch occupies residues Met-1–Asp-57. The Cytoplasmic portion of the chain corresponds to Met-1–Tyr-169. Positions Glu-40–Phe-49 are enriched in basic and acidic residues. Residues Glu-40 to Arg-145 form a disordered region. Phosphoserine is present on residues Ser-80 and Ser-81. The residue at position 84 (Thr-84) is a Phosphothreonine. Positions Val-122–Gly-137 are enriched in gly residues. Ser-127 bears the Phosphoserine mark. A helical transmembrane segment spans residues Phe-170–Leu-190. At Pro-191–Gly-205 the chain is on the extracellular side. Residues Met-206–Ala-226 traverse the membrane as a helical segment. Residues Asp-227–Gln-233 are Cytoplasmic-facing. The chain crosses the membrane as a helical span at residues Cys-234–Gly-254. The Extracellular segment spans residues Tyr-255–Arg-262. The chain crosses the membrane as a helical span at residues Leu-263–Phe-283. Residues Leu-284–Ser-294 are Cytoplasmic-facing. Residues Trp-295 to Ile-315 traverse the membrane as a helical segment. Residues Pro-316–Arg-334 lie on the Extracellular side of the membrane. Residues Val-335–Pro-355 traverse the membrane as a helical segment. The Cytoplasmic segment spans residues Glu-356–Thr-447. Residue Ser-393 is modified to Phosphoserine. The helical transmembrane segment at Leu-448–Phe-468 threads the bilayer. At Pro-469 to Tyr-598 the chain is on the extracellular side. The residue at position 480 (Tyr-480) is a Phosphotyrosine. N-linked (GlcNAc...) asparagine glycosylation is found at Asn-498, Asn-548, and Asn-573. Residues Phe-599 to Met-619 form a helical membrane-spanning segment. Over Asp-620–Arg-626 the chain is Cytoplasmic. Residues Met-627 to Ser-647 form a helical membrane-spanning segment. At Glu-648–Met-651 the chain is on the extracellular side. The chain crosses the membrane as a helical span at residues Ile-652–Leu-672. Residues Thr-673–Ala-685 lie on the Cytoplasmic side of the membrane. The chain crosses the membrane as a helical span at residues Phe-686 to Val-708. The Extracellular segment spans residues Gly-709 to Lys-712. Residues Ala-713–Leu-731 form a helical membrane-spanning segment. Residues Lys-732–Gln-742 are Cytoplasmic-facing.

The protein belongs to the major facilitator superfamily. In terms of assembly, interacts with SYT1/synaptotagmin-1 in a calcium-dependent manner. Binds the adapter protein complex AP-2. (Microbial infection) Interacts with C.botulinum neurotoxin type A (BoNT/A, botA). Post-translationally, phosphorylation by CK1 of the N-terminal cytoplasmic domain regulates interaction with SYT1. In terms of processing, N-glycosylated. Expressed in conventional synapses and cone ribbon synapses in the retina (at protein level). Expressed in diaphragm motor nerve terminals (at protein level). Expressed in hippocampus neurons (at protein level).

The protein resides in the presynapse. Its subcellular location is the cytoplasmic vesicle. It is found in the secretory vesicle. It localises to the synaptic vesicle membrane. Functionally, plays a role in the control of regulated secretion in neural and endocrine cells, enhancing selectively low-frequency neurotransmission. Positively regulates vesicle fusion by maintaining the readily releasable pool of secretory vesicles. (Microbial infection) Receptor for C.botulinum neurotoxin type A (BoNT/A, botA); the toxin probably binds via extracellular loop 4. Its function is as follows. (Microbial infection) Possible receptor for C.botulinum neurotoxin type D (BoNT/D, botD); BoNT/D does not bind to extracellular loop 4 as do BoNT/A and BoNT/E. In terms of biological role, (Microbial infection) Receptor for C.botulinum neurotoxin type E (BoNT/E); the toxin probably binds via extracellular loop 4. It probably requires glycosylation of Asn-573. This is Synaptic vesicle glycoprotein 2A (Sv2a) from Mus musculus (Mouse).